The chain runs to 850 residues: RPA-related protein RADX (850 aa).

Residues methionine 1–glycine 31 form a disordered region. Positions tryptophan 228–asparagine 331 form a DNA-binding region, OB. Disordered regions lie at residues glutamate 575–glutamine 612 and glycine 632–arginine 671. The span at glycine 590 to proline 608 shows a compositional bias: basic and acidic residues. Polar residues predominate over residues proline 643–glycine 668.

The protein localises to the chromosome. Functionally, single-stranded DNA-binding protein recruited to replication forks to maintain genome stability. Prevents fork collapse by antagonizing the accumulation of RAD51 at forks to ensure the proper balance of fork remodeling and protection without interfering with the capacity of cells to complete homologous recombination of double-strand breaks. The sequence is that of RPA-related protein RADX from Mus musculus (Mouse).